We begin with the raw amino-acid sequence, 493 residues long: Glutamyl-tRNA(Gln) amidotransferase subunit A (493 aa).

Active-site charge relay system residues include Lys79 and Ser159. Ser183 serves as the catalytic Acyl-ester intermediate.

Belongs to the amidase family. GatA subfamily. As to quaternary structure, heterotrimer of A, B and C subunits.

The enzyme catalyses L-glutamyl-tRNA(Gln) + L-glutamine + ATP + H2O = L-glutaminyl-tRNA(Gln) + L-glutamate + ADP + phosphate + H(+). Allows the formation of correctly charged Gln-tRNA(Gln) through the transamidation of misacylated Glu-tRNA(Gln) in organisms which lack glutaminyl-tRNA synthetase. The reaction takes place in the presence of glutamine and ATP through an activated gamma-phospho-Glu-tRNA(Gln). The chain is Glutamyl-tRNA(Gln) amidotransferase subunit A from Brucella abortus (strain S19).